The following is a 1077-amino-acid chain: ATP-dependent helicase/deoxyribonuclease subunit B (1077 aa).

The protein belongs to the helicase family. AddB/RexB type 2 subfamily. Heterodimer of AddA and RexB. Mg(2+) is required as a cofactor.

Its function is as follows. The heterodimer acts as both an ATP-dependent DNA helicase and an ATP-dependent, dual-direction single-stranded exonuclease. Recognizes the chi site generating a DNA molecule suitable for the initiation of homologous recombination. This subunit has 5' -&gt; 3' nuclease activity but not helicase activity. The sequence is that of ATP-dependent helicase/deoxyribonuclease subunit B from Streptococcus agalactiae serotype Ia (strain ATCC 27591 / A909 / CDC SS700).